The chain runs to 1235 residues: Bromodomain-containing protein 8 (1235 aa).

The residue at position 85 (Lys85) is an N6-acetyllysine. A coiled-coil region spans residues 97–171; the sequence is VRKLTAERVE…ATDAAYQARQ (75 aa). At Arg124 the chain carries Phosphothreonine. 2 positions are modified to phosphoserine: Leu128 and Asp144. The disordered stretch occupies residues 186–205; sequence RSPIDSASPGGDYPLGDLTP. The residue at position 264 (Ala264) is a Phosphothreonine. 4 positions are modified to phosphoserine: Ser268, Ser284, Ser383, and Ser387. Lys469 participates in a covalent cross-link: Glycyl lysine isopeptide (Lys-Gly) (interchain with G-Cter in SUMO2). At Lys481 the chain carries N6-acetyllysine; alternate. Lys481 is covalently cross-linked (Glycyl lysine isopeptide (Lys-Gly) (interchain with G-Cter in SUMO1); alternate). Lys481 is covalently cross-linked (Glycyl lysine isopeptide (Lys-Gly) (interchain with G-Cter in SUMO2); alternate). Glycyl lysine isopeptide (Lys-Gly) (interchain with G-Cter in SUMO2) cross-links involve residues Lys509 and Lys575. A disordered region spans residues 551 to 597; the sequence is TAAGEIVEADVAIGKGDETPLTNVKTEASPESMLSPSHGSNPIEDPL. At Ser579 the chain carries Phosphoserine. Residue Lys612 forms a Glycyl lysine isopeptide (Lys-Gly) (interchain with G-Cter in SUMO2) linkage. Phosphoserine occurs at positions 621, 637, and 641. The tract at residues 621–672 is disordered; the sequence is SQIKDAPGEDEEEDGVSEAASLEEPKEEDQGEGYLSEMDNEPPVSESDDGFS. A Bromo 1 domain is found at 706 to 811; that stretch reads IQAQKIWKKA…RDVLEQIQQF (106 aa). 3 disordered regions span residues 827–848, 903–940, and 966–999; these read AKSL…DSVP, ETED…AARK, and ESSE…ETEE. Residues 831-846 show a composition bias toward basic and acidic residues; it reads RGRDSTRKQDASEKDS. A compositionally biased stretch (acidic residues) spans 905-915; sequence EDPEAEELEES. Position 924 is a phosphoserine (Leu924). The span at 979-999 shows a compositional bias: basic and acidic residues; the sequence is QEGREIKASEGERELCRETEE. The region spanning 1099–1207 is the Bromo 2 domain; the sequence is DDPVQDHLLF…QEVLEQIQVL (109 aa).

Component of the NuA4 histone acetyltransferase complex which contains the catalytic subunit KAT5/TIP60 and the subunits EP400, TRRAP/PAF400, BRD8/SMAP, EPC1, DMAP1/DNMAP1, RUVBL1/TIP49, RUVBL2, ING3, actin, ACTL6A/BAF53A, MORF4L1/MRG15, MORF4L2/MRGX, MRGBP, YEATS4/GAS41, VPS72/YL1 and MEAF6. The NuA4 complex interacts with MYC and the adenovirus E1A protein. Component of a NuA4-related complex which contains EP400, TRRAP/PAF400, SRCAP, BRD8/SMAP, EPC1, DMAP1/DNMAP1, RUVBL1/TIP49, RUVBL2, actin, ACTL6A/BAF53A, VPS72 and YEATS4/GAS41. BRD8 isoform 2 interacts with RXRA/NR2B1 and THRB/ERBA2. Component of a SWR1-like complex. In terms of tissue distribution, expressed in adipose tissue, brain, heart, kidney, liver, lung, pancreas, placenta and skeletal muscle.

It localises to the nucleus. Its function is as follows. May act as a coactivator during transcriptional activation by hormone-activated nuclear receptors (NR). Isoform 2 stimulates transcriptional activation by AR/DHTR, ESR1/NR3A1, RXRA/NR2B1 and THRB/ERBA2. At least isoform 1 and isoform 2 are components of the NuA4 histone acetyltransferase (HAT) complex which is involved in transcriptional activation of select genes principally by acetylation of nucleosomal histones H4 and H2A. This modification may both alter nucleosome - DNA interactions and promote interaction of the modified histones with other proteins which positively regulate transcription. This complex may be required for the activation of transcriptional programs associated with oncogene and proto-oncogene mediated growth induction, tumor suppressor mediated growth arrest and replicative senescence, apoptosis, and DNA repair. NuA4 may also play a direct role in DNA repair when recruited to sites of DNA damage. Component of a SWR1-like complex that specifically mediates the removal of histone H2A.Z/H2AZ1 from the nucleosome. This is Bromodomain-containing protein 8 (BRD8) from Homo sapiens (Human).